Reading from the N-terminus, the 512-residue chain is Glycerol-3-phosphate dehydrogenase (512 aa).

16 to 44 (DVAVVGGGINGVGIAADAAGRGLSVFLCE) lines the FAD pocket.

Belongs to the FAD-dependent glycerol-3-phosphate dehydrogenase family. The cofactor is FAD.

It is found in the cytoplasm. It carries out the reaction a quinone + sn-glycerol 3-phosphate = dihydroxyacetone phosphate + a quinol. This is Glycerol-3-phosphate dehydrogenase (glpD) from Pseudomonas aeruginosa (strain ATCC 15692 / DSM 22644 / CIP 104116 / JCM 14847 / LMG 12228 / 1C / PRS 101 / PAO1).